The primary structure comprises 485 residues: Glutamate--tRNA ligase 2 (485 aa).

The 'HIGH' region signature appears at 10 to 20 (PSPTGPIHIGN). Positions 252–256 (KLSKR) match the 'KMSKS' region motif. Position 255 (K255) interacts with ATP.

It belongs to the class-I aminoacyl-tRNA synthetase family. Glutamate--tRNA ligase type 1 subfamily. In terms of assembly, monomer.

It is found in the cytoplasm. The catalysed reaction is tRNA(Glu) + L-glutamate + ATP = L-glutamyl-tRNA(Glu) + AMP + diphosphate. Its function is as follows. Catalyzes the attachment of glutamate to tRNA(Glu) in a two-step reaction: glutamate is first activated by ATP to form Glu-AMP and then transferred to the acceptor end of tRNA(Glu). The protein is Glutamate--tRNA ligase 2 of Caldanaerobacter subterraneus subsp. tengcongensis (strain DSM 15242 / JCM 11007 / NBRC 100824 / MB4) (Thermoanaerobacter tengcongensis).